Reading from the N-terminus, the 382-residue chain is Polyadenylate-binding protein 5 (382 aa).

4 consecutive RRM domains span residues 18–96, 106–182, 199–276, and 302–378; these read AALY…WSQP, GNIF…RFKF, TNVF…RAQK, and VPIY…LGQA.

Its subcellular location is the cytoplasm. Binds the poly(A) tail of mRNA. May be involved in cytoplasmic regulatory processes of mRNA metabolism. Can probably bind to cytoplasmic RNA sequences other than poly(A) in vivo. The protein is Polyadenylate-binding protein 5 (PABPC5) of Gorilla gorilla gorilla (Western lowland gorilla).